The primary structure comprises 244 residues: Mono-ADP-ribosyltransferase C3 (244 aa).

The N-terminal stretch at 1–40 (MKGIRKSILCLVLSAGVIAPVTTSIVQSPQKCYACTVDKG) is a signal peptide. A TR mART core domain is found at 44–244 (DTFTEFTNVE…QIMITAMIFK (201 aa)). NAD(+) is bound by residues Thr-80, Asn-87, Arg-91, 128–131 (RGDD), and 167–169 (RTE). Arg-128 is a catalytic residue. Ser-174 is a catalytic residue. Residues 182 to 185 (FGGR) and 211 to 213 (QLE) each bind NAD(+). Residue Glu-213 is part of the active site.

The protein to exoenzymes 3 of C.limosum and C.botulinum D phage, and to S.aureus ediN. In terms of assembly, monomer.

It is found in the secreted. It catalyses the reaction L-asparaginyl-[protein] + NAD(+) = N(4)-(ADP-D-ribosyl)-L-asparaginyl-[protein] + nicotinamide + H(+). Functionally, ADP-ribosylates eukaryotic Rho and Rac proteins on an asparagine residue. In Clostridium botulinum C phage (Clostridium botulinum C bacteriophage), this protein is Mono-ADP-ribosyltransferase C3.